The chain runs to 48 residues: Large ribosomal subunit protein bL34c (48 aa).

Residues 18–48 (SGFRSRMATPQGRKTIRNRRKKGRKNLTLRR) form a disordered region. Over residues 31 to 48 (KTIRNRRKKGRKNLTLRR) the composition is skewed to basic residues.

The protein belongs to the bacterial ribosomal protein bL34 family.

It localises to the plastid. It is found in the chloroplast. The polypeptide is Large ribosomal subunit protein bL34c (Phaeodactylum tricornutum (strain CCAP 1055/1)).